The chain runs to 302 residues: Stanniocalcin-2 (302 aa).

Positions 1 to 24 (MCAERLGQFMTLALVLATFDPARG) are cleaved as a signal peptide. The interval 23-44 (RGTDATNPPEGPQDRSPQQKGR) is disordered. Residues Asn73 and Asn74 are each glycosylated (N-linked (GlcNAc...) asparagine). Residues 217–302 (RPPTAPPERQ…EQSEYSDIRR (86 aa)) form a disordered region. Positions 227 to 264 (PQVDRTKLSRAHHGEAGHHLPEPSSRETGRGAKGERGS) are enriched in basic and acidic residues. Phosphoserine occurs at positions 250 and 251. A Phosphothreonine modification is found at Thr254.

This sequence belongs to the stanniocalcin family. As to quaternary structure, homodimer; disulfide-linked.

The protein resides in the secreted. In terms of biological role, has an anti-hypocalcemic action on calcium and phosphate homeostasis. In Pongo abelii (Sumatran orangutan), this protein is Stanniocalcin-2 (STC2).